Reading from the N-terminus, the 852-residue chain is Gamma-tubulin complex component 2 homolog (852 aa).

Serine 73 is subject to Phosphoserine.

Belongs to the TUBGCP family. Gamma-tubulin small complex (Gamma TuSC) is a heterotetrameric complex which contains two molecules of gamma-tubulin, and one molecule each of Dgrip84 and Dgrip91. The gamma-tubulin in this complex binds preferentially to GDP over GTP.

Its subcellular location is the cytoplasm. The protein resides in the cytoskeleton. It localises to the microtubule organizing center. It is found in the centrosome. The protein localises to the perinuclear region. This chain is Gamma-tubulin complex component 2 homolog (Grip84), found in Drosophila melanogaster (Fruit fly).